The following is a 226-amino-acid chain: Matrix protein (226 aa).

Residues 2–4 carry the dynamin binding motif; it reads KSL. Residues 28–31 carry the PPXY motif motif; the sequence is PPSY. Residues 40–43 carry the PTAP/PSAP motif motif; sequence PSAP.

The protein belongs to the vesiculoviruses matrix protein family. As to quaternary structure, homomultimer. Interacts with viral nucleocapsid; this interaction contributes to the virion assembly. Interacts with the viral envelope glycoprotein; this interaction contributes to the virion assembly. Interacts with host RAE1-NUP98 complex. Interacts with host NEDD4 and TSG101. Interacts with host dynamin. Interacts with host NDUFAF4; the interaction inhibits viral propagation and is independent of interferon activation. Interacts with host GTF2H5; the interaction may inhibit host transcription. Post-translationally, phosphorylated by host.

It localises to the virion. Its subcellular location is the host endomembrane system. The protein localises to the host nucleus membrane. The protein resides in the host nucleus. It is found in the host cytoplasm. Forms a double layer around the helical nucleocapsid, the inner matrix layer binding to the N helix and the outer matrix layer binding to the envelope glycoprotein. Plays a major role in assembly and budding of virion, by recruiting cellular partners of the ESCRT complexes that play a key role in releasing the budding particle from the host membrane. Condensates the ribonucleocapsid core during virus assembly. Inhibits the host mRNA nuclear export thereby inducing the shut off of cellular transcription and preventing the interferon signaling and the establishment of antiviral state in infected cells. This shutoff presumably inhibits interferon signaling and thus establishment of antiviral state in virus infected cells. Induces cell-rounding, cytoskeleton disorganization and apoptosis in infected cell. Inhibits host transcription, possibly through interaction with host DNA repair factor IIH/TFIIH GTF2H5 subunit. This is Matrix protein (M) from Isfahan virus (ISFV).